The chain runs to 482 residues: UDP-N-acetylmuramate--L-alanine ligase (482 aa).

Position 123–129 (123–129 (GTHGKTT)) interacts with ATP.

The protein belongs to the MurCDEF family.

It is found in the cytoplasm. It carries out the reaction UDP-N-acetyl-alpha-D-muramate + L-alanine + ATP = UDP-N-acetyl-alpha-D-muramoyl-L-alanine + ADP + phosphate + H(+). Its pathway is cell wall biogenesis; peptidoglycan biosynthesis. Cell wall formation. This Pseudomonas putida (strain GB-1) protein is UDP-N-acetylmuramate--L-alanine ligase.